The following is a 362-amino-acid chain: Probable dual-specificity RNA methyltransferase RlmN (362 aa).

The active-site Proton acceptor is Glu105. One can recognise a Radical SAM core domain in the interval 111–344 (HEYGNSICVT…VTIRREQGHD (234 aa)). A disulfide bond links Cys118 and Cys349. Residues Cys125, Cys129, and Cys132 each coordinate [4Fe-4S] cluster. S-adenosyl-L-methionine contacts are provided by residues 175–176 (GE), Ser207, 230–232 (SLH), and Asn306. Cys349 (S-methylcysteine intermediate) is an active-site residue.

It belongs to the radical SAM superfamily. RlmN family. [4Fe-4S] cluster serves as cofactor.

Its subcellular location is the cytoplasm. The enzyme catalyses adenosine(2503) in 23S rRNA + 2 reduced [2Fe-2S]-[ferredoxin] + 2 S-adenosyl-L-methionine = 2-methyladenosine(2503) in 23S rRNA + 5'-deoxyadenosine + L-methionine + 2 oxidized [2Fe-2S]-[ferredoxin] + S-adenosyl-L-homocysteine. The catalysed reaction is adenosine(37) in tRNA + 2 reduced [2Fe-2S]-[ferredoxin] + 2 S-adenosyl-L-methionine = 2-methyladenosine(37) in tRNA + 5'-deoxyadenosine + L-methionine + 2 oxidized [2Fe-2S]-[ferredoxin] + S-adenosyl-L-homocysteine. Specifically methylates position 2 of adenine 2503 in 23S rRNA and position 2 of adenine 37 in tRNAs. The polypeptide is Probable dual-specificity RNA methyltransferase RlmN (Bacillus cereus (strain B4264)).